The sequence spans 323 residues: Cuticle collagen 39 (323 aa).

The first 28 residues, 1 to 28 (MTGPTCLAVVAGISGVFVFGALFSVAQI), serve as a signal peptide directing secretion. Residues 80-89 (QCNCGPQASN) show a composition bias toward polar residues. The disordered stretch occupies residues 80-293 (QCNCGPQASN…GAAEQGYRHR (214 aa)). Triple-helical region stretches follow at residues 93–125 (GPPGPPGAPGDRGLDGQPGGAGNPGQPGVAGPK), 138–200 (GSPG…GGQR), and 203–265 (GLPG…PGAD). The span at 108 to 117 (GQPGGAGNPG) shows a compositional bias: gly residues. Positions 136 to 146 (PAGSPGPAGAP) are enriched in low complexity. Positions 159–168 (GHPGQGGSQG) are enriched in gly residues. Low complexity predominate over residues 169–191 (PAGPRGPAGDAGAPGQVGAPGNP). The segment covering 224 to 233 (GQSGGQGQQG) has biased composition (gly residues). Positions 234 to 267 (PAGPAGPDGQPGQPGQDGQAGAPGNDGAPGADAA) are enriched in low complexity.

It belongs to the cuticular collagen family. In terms of assembly, collagen polypeptide chains are complexed within the cuticle by disulfide bonds and other types of covalent cross-links.

Nematode cuticles are composed largely of collagen-like proteins. The cuticle functions both as an exoskeleton and as a barrier to protect the worm from its environment. This chain is Cuticle collagen 39 (col-39), found in Caenorhabditis elegans.